The sequence spans 86 residues: Small ribosomal subunit protein bS16 (86 aa).

The protein belongs to the bacterial ribosomal protein bS16 family.

The polypeptide is Small ribosomal subunit protein bS16 (Thermoanaerobacter sp. (strain X514)).